The following is a 271-amino-acid chain: Aminoglycoside 3'-phosphotransferase (271 aa).

D198 serves as the catalytic Proton acceptor.

The protein belongs to the aminoglycoside phosphotransferase family.

It carries out the reaction kanamycin A + ATP = kanamycin 3'-phosphate + ADP + H(+). Resistance to kanamycin and structurally-related aminoglycosides, including amikacin. The sequence is that of Aminoglycoside 3'-phosphotransferase from Salmonella typhimurium.